Here is a 376-residue protein sequence, read N- to C-terminus: Hydroxylysine kinase (376 aa).

Asp229 functions as the Proton acceptor in the catalytic mechanism.

This sequence belongs to the aminoglycoside phosphotransferase family.

The protein resides in the cytoplasm. It catalyses the reaction (5R)-5-hydroxy-L-lysine + GTP = (5R)-5-phosphooxy-L-lysine + GDP + H(+). Its function is as follows. Catalyzes the GTP-dependent phosphorylation of 5-hydroxy-L-lysine. This Bos taurus (Bovine) protein is Hydroxylysine kinase (HYKK).